A 247-amino-acid chain; its full sequence is Ribosomal RNA small subunit methyltransferase J (247 aa).

Residues 101–102, 117–118, 153–154, and aspartate 171 contribute to the S-adenosyl-L-methionine site; these read RD, ER, and SS.

It belongs to the methyltransferase superfamily. RsmJ family.

The protein resides in the cytoplasm. The enzyme catalyses guanosine(1516) in 16S rRNA + S-adenosyl-L-methionine = N(2)-methylguanosine(1516) in 16S rRNA + S-adenosyl-L-homocysteine + H(+). In terms of biological role, specifically methylates the guanosine in position 1516 of 16S rRNA. The sequence is that of Ribosomal RNA small subunit methyltransferase J from Photorhabdus laumondii subsp. laumondii (strain DSM 15139 / CIP 105565 / TT01) (Photorhabdus luminescens subsp. laumondii).